Here is a 341-residue protein sequence, read N- to C-terminus: L-sulfolactate dehydrogenase (341 aa).

This sequence belongs to the LDH2/MDH2 oxidoreductase family.

The protein localises to the cytoplasm. It carries out the reaction a (2S)-2-hydroxycarboxylate + NAD(+) = a 2-oxocarboxylate + NADH + H(+). It participates in cofactor biosynthesis; coenzyme M biosynthesis; sulfoacetaldehyde from phosphoenolpyruvate and sulfite: step 3/4. It functions in the pathway cofactor biosynthesis; 5,6,7,8-tetrahydromethanopterin biosynthesis. Catalyzes the reduction of sulfopyruvate to (R)-sulfolactate. Involved in the biosynthesis of both coenzyme M (with (R)-sulfolactate) and methanopterin (with alpha-ketoglutarate). This chain is L-sulfolactate dehydrogenase (comC), found in Methanothermobacter thermautotrophicus (strain ATCC 29096 / DSM 1053 / JCM 10044 / NBRC 100330 / Delta H) (Methanobacterium thermoautotrophicum).